Here is a 208-residue protein sequence, read N- to C-terminus: Small ribosomal subunit protein uS4 (208 aa).

One can recognise an S4 RNA-binding domain in the interval 98 to 166 (SRLDNVVYRM…VKEAIEASRN (69 aa)).

The protein belongs to the universal ribosomal protein uS4 family. In terms of assembly, part of the 30S ribosomal subunit. Contacts protein S5. The interaction surface between S4 and S5 is involved in control of translational fidelity.

In terms of biological role, one of the primary rRNA binding proteins, it binds directly to 16S rRNA where it nucleates assembly of the body of the 30S subunit. Its function is as follows. With S5 and S12 plays an important role in translational accuracy. This is Small ribosomal subunit protein uS4 from Kosmotoga olearia (strain ATCC BAA-1733 / DSM 21960 / TBF 19.5.1).